A 252-amino-acid chain; its full sequence is uncharacterized protein (252 aa).

Belongs to the LarE family.

This is an uncharacterized protein from Methanocaldococcus jannaschii (strain ATCC 43067 / DSM 2661 / JAL-1 / JCM 10045 / NBRC 100440) (Methanococcus jannaschii).